A 110-amino-acid chain; its full sequence is Small ribosomal subunit protein mS33 (110 aa).

A compositionally biased stretch (basic residues) spans 84–95 (KRRGKGAPKKMK). A disordered region spans residues 84–110 (KRRGKGAPKKMKKDAAATAKGKGKKKK).

This sequence belongs to the mitochondrion-specific ribosomal protein mS33 family. As to quaternary structure, component of the mitochondrial small ribosomal subunit (mt-SSU). Mature yeast 74S mitochondrial ribosomes consist of a small (37S) and a large (54S) subunit. The 37S small subunit contains a 15S ribosomal RNA (15S mt-rRNA) and 34 different proteins. The 54S large subunit contains a 21S rRNA (21S mt-rRNA) and 46 different proteins.

It is found in the mitochondrion. Component of the mitochondrial ribosome (mitoribosome), a dedicated translation machinery responsible for the synthesis of mitochondrial genome-encoded proteins, including at least some of the essential transmembrane subunits of the mitochondrial respiratory chain. The mitoribosomes are attached to the mitochondrial inner membrane and translation products are cotranslationally integrated into the membrane. In Saccharomyces cerevisiae (strain ATCC 204508 / S288c) (Baker's yeast), this protein is Small ribosomal subunit protein mS33 (RSM27).